The sequence spans 208 residues: Uracil phosphoribosyltransferase (208 aa).

5-phospho-alpha-D-ribose 1-diphosphate contacts are provided by residues R78, R103, and 130 to 138 (DPMLATGGS). Uracil is bound by residues I193 and 198–200 (GDA). Residue D199 participates in 5-phospho-alpha-D-ribose 1-diphosphate binding.

This sequence belongs to the UPRTase family. The cofactor is Mg(2+).

It carries out the reaction UMP + diphosphate = 5-phospho-alpha-D-ribose 1-diphosphate + uracil. Its pathway is pyrimidine metabolism; UMP biosynthesis via salvage pathway; UMP from uracil: step 1/1. Allosterically activated by GTP. In terms of biological role, catalyzes the conversion of uracil and 5-phospho-alpha-D-ribose 1-diphosphate (PRPP) to UMP and diphosphate. The chain is Uracil phosphoribosyltransferase from Desulfovibrio desulfuricans (strain ATCC 27774 / DSM 6949 / MB).